The primary structure comprises 268 residues: Enoyl-[acyl-carrier-protein] reductase [NADH] 2 (268 aa).

Residues glycine 14, 20-21, glutamine 41, 65-66, and isoleucine 93 contribute to the NAD(+) site; these read SI and DV. Residues tyrosine 146 and tyrosine 156 each act as proton acceptor in the active site. NAD(+) is bound by residues lysine 163 and 192–196; that span reads IRTLA.

It belongs to the short-chain dehydrogenases/reductases (SDR) family. FabI subfamily.

The protein resides in the cell inner membrane. The enzyme catalyses a 2,3-saturated acyl-[ACP] + NAD(+) = a (2E)-enoyl-[ACP] + NADH + H(+). It functions in the pathway lipid metabolism; fatty acid biosynthesis. The protein is Enoyl-[acyl-carrier-protein] reductase [NADH] 2 (fabI2) of Rhizobium meliloti (strain 1021) (Ensifer meliloti).